The following is a 474-amino-acid chain: Pyruvate kinase (474 aa).

Arg32 contacts substrate. Residues Asn34, Ser36, and Asp66 each contribute to the K(+) site. 34–37 (NFSH) contacts ATP. ATP-binding residues include Arg73 and Lys155. Glu221 is a binding site for Mg(2+). The substrate site is built by Gly244, Asp245, and Thr277. Position 245 (Asp245) interacts with Mg(2+).

Belongs to the pyruvate kinase family. As to quaternary structure, homotetramer. It depends on Mg(2+) as a cofactor. The cofactor is K(+).

The catalysed reaction is pyruvate + ATP = phosphoenolpyruvate + ADP + H(+). Its pathway is carbohydrate degradation; glycolysis; pyruvate from D-glyceraldehyde 3-phosphate: step 5/5. The sequence is that of Pyruvate kinase (pykF) from Clostridium perfringens (strain 13 / Type A).